The primary structure comprises 293 residues: Large ribosomal subunit protein uL2c (293 aa).

Residues 224-245 are disordered; sequence VMNPVDHPHGGGEGKSPIGRAR.

It belongs to the universal ribosomal protein uL2 family. Part of the 50S ribosomal subunit.

The protein localises to the plastid. It localises to the chloroplast. The chain is Large ribosomal subunit protein uL2c (rpl2) from Pyropia yezoensis (Susabi-nori).